We begin with the raw amino-acid sequence, 561 residues long: MSEVKSDIQIAREAKMQPINDILAKINVPDESSAFSPMGRHIAKINLEYLDTLKDKPNGKLVLVTAITPTPAGEGKTTTSVGLNDGLNKIGKKSIVCLREPSLGPSFGMKGGAAGGGYAQVVPMEQINLHFTGDFHAITSAHNLLSALIDNHIYWGNKLDIDVRRIVWKRVMDMNDRSLRSININLGGVANGFPREDGFDITVASEIMAIFCLSNDLEDLEKRIGNITIAYTRDKKPVYAKDLKAQGPMTVLLKDAIRPNVTQTLENNPAIIHGGPFANIAHGCNSVIATKTGLKLADYVVTEAGFGADLGAEKFLDIKCRKSDLKPSCVVIVATIRALKMHGGVAKDDLKTENVEALKKGLVNLQRHVENVKKFGLPVAVAVNHFIKDTENEVKALIEFCDTIGVKASLCTHWANGGEGTKELASHVAELCEKNEDKFKFLYESKTPLFKKIETIAKEIYRADEVIADTKIRDQLKSFEDAGYGDFPICIAKTQYSFSTDPSLKGAPTGHSLPIREIKLSSGAEFIVVICGAVMTMPGLPRVPAADSIKLNKDGEIEGLF.

Position 70-77 (70-77 (TPAGEGKT)) interacts with ATP.

This sequence belongs to the formate--tetrahydrofolate ligase family.

The enzyme catalyses (6S)-5,6,7,8-tetrahydrofolate + formate + ATP = (6R)-10-formyltetrahydrofolate + ADP + phosphate. It functions in the pathway one-carbon metabolism; tetrahydrofolate interconversion. The polypeptide is Formate--tetrahydrofolate ligase (Pelagibacter ubique (strain HTCC1062)).